A 355-amino-acid chain; its full sequence is MADIPADRKKIVQEGWSRLFSDIEQPSYIQKFPSQESLYVSFFEQCAFDDFDLTLLRFLKARKFVVTDSSDMLANAIVWRQQANLRSIMVRGENGLNQNFVKASMYFIWGQDKKGRAIVFLNLHNFIPPKNTKDMEELKALILYAMENARLFLDSEQNAAKGVLGLVDLTYFSRKNIDLDFARVFAETFQNYYPEILGQALIVGSGFRMALFEGVWSIGKYFLDPEVRSKVTFCKPAQVSGYVDSKYIPLSMHGQFDETKLYERAPPETAGIGKPENYEELDKEYVDAAKEFIRLTREWIYAAGKPQEAEIEEKRKAFKYECKKLWRKGVALRPPNIYQRLGLIDANGHVDWSKA.

The CRAL-TRIO domain maps to Glu93–Lys260.

The polypeptide is CRAL-TRIO domain-containing protein C365.01 (Schizosaccharomyces pombe (strain 972 / ATCC 24843) (Fission yeast)).